The chain runs to 1383 residues: Putative autophagy-related protein 11 (1383 aa).

2 coiled-coil regions span residues 16–49 (DKNN…YELN) and 117–324 (NLFL…QNKE). Basic and acidic residues-rich tracts occupy residues 1151–1224 (EEEK…EDRK) and 1233–1249 (HSSD…KTKE). Positions 1151 to 1249 (EEEKKKNEEE…KYNKKEKTKE (99 aa)) are disordered.

This sequence belongs to the ATG11 family.

In terms of biological role, involved in cytoplasm to vacuole transport (Cvt), pexophagy, mitophagy and nucleophagy. Works as scaffold proteins that recruit ATG proteins to the pre-autophagosome (PAS), the site of vesicle/autophagosome formation. The sequence is that of Putative autophagy-related protein 11 from Plasmodium falciparum (isolate 3D7).